The primary structure comprises 95 residues: MPTFIVLSTLTDDGAETLVKNPERIKEVNQELERDFGVRVVAQYAVLGPYDFVNVVEAEDAATVARAMLHLASRGSVKTMTLEAIPVADLIARLK.

In terms of assembly, interacts with glutamine synthetase (TTHA1329) and cystathionine beta-lyase (TTHA1620), but proteins do not form a ternary complex.

Binds to glutamine synthetase and cystathionine beta-lyase. May be utilized for the efficient use of nitrogen in the global nitrogen regulation of T.thermophilus. In Thermus thermophilus (strain ATCC 27634 / DSM 579 / HB8), this protein is Glutamine synthetase and cystathionine beta-lyase binding protein.